The chain runs to 290 residues: Pyridoxal kinase PdxY (290 aa).

Substrate is bound by residues Ser-12 and 47-48; that span reads TQ. ATP is bound by residues Asp-114, Glu-151, Lys-184, and 211-214; that span reads RPLL. Position 225 (Asp-225) interacts with substrate.

This sequence belongs to the pyridoxine kinase family. PdxY subfamily. As to quaternary structure, homodimer. Requires Mg(2+) as cofactor.

It catalyses the reaction pyridoxal + ATP = pyridoxal 5'-phosphate + ADP + H(+). The protein operates within cofactor metabolism; pyridoxal 5'-phosphate salvage; pyridoxal 5'-phosphate from pyridoxal: step 1/1. Functionally, pyridoxal kinase involved in the salvage pathway of pyridoxal 5'-phosphate (PLP). Catalyzes the phosphorylation of pyridoxal to PLP. This Pseudomonas fluorescens (strain ATCC BAA-477 / NRRL B-23932 / Pf-5) protein is Pyridoxal kinase PdxY.